The following is a 301-amino-acid chain: D-alanine--D-alanine ligase (301 aa).

The ATP-grasp domain occupies 101 to 296 (KLMWRAAGLA…YPTLVRRVLE (196 aa)). 127–182 (EEELGLPLFVKPAREGSSIGVTKVKERGALKAAYEEAARHDPLVIAEKGVMGGEYT) is an ATP binding site. Asp-250, Glu-263, and Asn-265 together coordinate Mg(2+).

Belongs to the D-alanine--D-alanine ligase family. Mg(2+) serves as cofactor. The cofactor is Mn(2+).

The protein resides in the cytoplasm. It catalyses the reaction 2 D-alanine + ATP = D-alanyl-D-alanine + ADP + phosphate + H(+). It functions in the pathway cell wall biogenesis; peptidoglycan biosynthesis. Functionally, cell wall formation. This chain is D-alanine--D-alanine ligase, found in Dechloromonas aromatica (strain RCB).